A 673-amino-acid chain; its full sequence is DNA ligase (673 aa).

NAD(+) contacts are provided by residues 34-38 (DAEYD), 83-84 (SL), and Glu116. Lys118 serves as the catalytic N6-AMP-lysine intermediate. The NAD(+) site is built by Arg139, Glu176, Lys293, and Lys317. Positions 411, 414, 429, and 435 each coordinate Zn(2+). Residues 595–673 (NQQNPFFGKT…EDEFLKWVNS (79 aa)) enclose the BRCT domain.

Belongs to the NAD-dependent DNA ligase family. LigA subfamily. It depends on Mg(2+) as a cofactor. The cofactor is Mn(2+).

The catalysed reaction is NAD(+) + (deoxyribonucleotide)n-3'-hydroxyl + 5'-phospho-(deoxyribonucleotide)m = (deoxyribonucleotide)n+m + AMP + beta-nicotinamide D-nucleotide.. Its function is as follows. DNA ligase that catalyzes the formation of phosphodiester linkages between 5'-phosphoryl and 3'-hydroxyl groups in double-stranded DNA using NAD as a coenzyme and as the energy source for the reaction. It is essential for DNA replication and repair of damaged DNA. The polypeptide is DNA ligase (Legionella pneumophila (strain Paris)).